The sequence spans 261 residues: Acyl-[acyl-carrier-protein]--UDP-N-acetylglucosamine O-acyltransferase (261 aa).

It belongs to the transferase hexapeptide repeat family. LpxA subfamily. As to quaternary structure, homotrimer.

The protein resides in the cytoplasm. It catalyses the reaction a (3R)-hydroxyacyl-[ACP] + UDP-N-acetyl-alpha-D-glucosamine = a UDP-3-O-[(3R)-3-hydroxyacyl]-N-acetyl-alpha-D-glucosamine + holo-[ACP]. Its pathway is glycolipid biosynthesis; lipid IV(A) biosynthesis; lipid IV(A) from (3R)-3-hydroxytetradecanoyl-[acyl-carrier-protein] and UDP-N-acetyl-alpha-D-glucosamine: step 1/6. Functionally, involved in the biosynthesis of lipid A, a phosphorylated glycolipid that anchors the lipopolysaccharide to the outer membrane of the cell. This Trichlorobacter lovleyi (strain ATCC BAA-1151 / DSM 17278 / SZ) (Geobacter lovleyi) protein is Acyl-[acyl-carrier-protein]--UDP-N-acetylglucosamine O-acyltransferase.